The primary structure comprises 252 residues: Receptor expression-enhancing protein 2 (252 aa).

2 helical membrane passes run M1 to Y21 and Y35 to T55. S150 is subject to Phosphoserine. Residues L165–A252 form a disordered region. A compositionally biased stretch (basic and acidic residues) spans S203–P217.

Belongs to the DP1 family. Interacts with odorant receptor proteins. As to expression, detected in brain, heart and skeletal muscle, and at low levels in placenta, kidney and pancreas. Expressed in circumvallate papillae.

Its subcellular location is the membrane. Its function is as follows. Required for endoplasmic reticulum (ER) network formation, shaping and remodeling. May enhance the cell surface expression of odorant receptors. This chain is Receptor expression-enhancing protein 2 (REEP2), found in Homo sapiens (Human).